The sequence spans 267 residues: Acetyl-coenzyme A carboxylase carboxyl transferase subunit beta 1 (267 aa).

The region spanning Thr-9–Gly-267 is the CoA carboxyltransferase N-terminal domain. 4 residues coordinate Zn(2+): Cys-13, Cys-16, Cys-31, and Cys-34. The segment at Cys-13–Cys-34 adopts a C4-type zinc-finger fold.

This sequence belongs to the AccD/PCCB family. Acetyl-CoA carboxylase is a heterohexamer composed of biotin carboxyl carrier protein (AccB), biotin carboxylase (AccC) and two subunits each of ACCase subunit alpha (AccA) and ACCase subunit beta (AccD). Zn(2+) is required as a cofactor.

It is found in the cytoplasm. The enzyme catalyses N(6)-carboxybiotinyl-L-lysyl-[protein] + acetyl-CoA = N(6)-biotinyl-L-lysyl-[protein] + malonyl-CoA. Its pathway is lipid metabolism; malonyl-CoA biosynthesis; malonyl-CoA from acetyl-CoA: step 1/1. In terms of biological role, component of the acetyl coenzyme A carboxylase (ACC) complex. Biotin carboxylase (BC) catalyzes the carboxylation of biotin on its carrier protein (BCCP) and then the CO(2) group is transferred by the transcarboxylase to acetyl-CoA to form malonyl-CoA. This Lactiplantibacillus plantarum (strain JDM1) (Lactobacillus plantarum) protein is Acetyl-coenzyme A carboxylase carboxyl transferase subunit beta 1.